The following is a 701-amino-acid chain: 1,4-alpha-glucan branching enzyme GlgB (701 aa).

Aspartate 381 (nucleophile) is an active-site residue. The Proton donor role is filled by glutamate 434.

This sequence belongs to the glycosyl hydrolase 13 family. GlgB subfamily. In terms of assembly, monomer.

It carries out the reaction Transfers a segment of a (1-&gt;4)-alpha-D-glucan chain to a primary hydroxy group in a similar glucan chain.. Its pathway is glycan biosynthesis; glycogen biosynthesis. Its function is as follows. Catalyzes the formation of the alpha-1,6-glucosidic linkages in glycogen by scission of a 1,4-alpha-linked oligosaccharide from growing alpha-1,4-glucan chains and the subsequent attachment of the oligosaccharide to the alpha-1,6 position. This Jannaschia sp. (strain CCS1) protein is 1,4-alpha-glucan branching enzyme GlgB.